Here is a 539-residue protein sequence, read N- to C-terminus: Peptide chain release factor 3 (539 aa).

A tr-type G domain is found at 14–283 (EKRRNFAIIS…AFLEYALQPE (270 aa)). Residues 23-30 (SHPDAGKT), 91-95 (DTPGH), and 145-148 (NKLD) contribute to the GTP site.

This sequence belongs to the TRAFAC class translation factor GTPase superfamily. Classic translation factor GTPase family. PrfC subfamily.

The protein localises to the cytoplasm. In terms of biological role, increases the formation of ribosomal termination complexes and stimulates activities of RF-1 and RF-2. It binds guanine nucleotides and has strong preference for UGA stop codons. It may interact directly with the ribosome. The stimulation of RF-1 and RF-2 is significantly reduced by GTP and GDP, but not by GMP. In Rippkaea orientalis (strain PCC 8801 / RF-1) (Cyanothece sp. (strain PCC 8801)), this protein is Peptide chain release factor 3.